Here is a 139-residue protein sequence, read N- to C-terminus: Putative pre-16S rRNA nuclease (139 aa).

It belongs to the YqgF nuclease family.

Its subcellular location is the cytoplasm. Could be a nuclease involved in processing of the 5'-end of pre-16S rRNA. The polypeptide is Putative pre-16S rRNA nuclease (Streptococcus pyogenes serotype M2 (strain MGAS10270)).